The sequence spans 496 residues: Cytochrome c-552 (496 aa).

The N-terminal stretch at 1–23 (MKKYKFLFAISIIAIGLMTVLLA) is a signal peptide. Position 100 (His-100) interacts with heme c. Cys-128, Cys-131, and Lys-132 together coordinate heme. Positions 166, 169, 170, 210, 213, and 214 each coordinate heme c. Residues Glu-216, Tyr-217, Lys-269, and Gln-271 each contribute to the Ca(2+) site. Residue Tyr-217 coordinates substrate. Residue His-272 participates in substrate binding. Heme c is bound by residues His-283, Cys-290, Cys-293, His-294, His-308, Cys-321, Cys-324, His-325, and His-400.

Belongs to the cytochrome c-552 family. Ca(2+) is required as a cofactor. Heme c serves as cofactor.

Its subcellular location is the periplasm. The enzyme catalyses 6 Fe(III)-[cytochrome c] + NH4(+) + 2 H2O = 6 Fe(II)-[cytochrome c] + nitrite + 8 H(+). The protein operates within nitrogen metabolism; nitrate reduction (assimilation). In terms of biological role, catalyzes the reduction of nitrite to ammonia, consuming six electrons in the process. This chain is Cytochrome c-552, found in Aliarcobacter butzleri (strain RM4018) (Arcobacter butzleri).